A 320-amino-acid chain; its full sequence is UDP-3-O-acyl-N-acetylglucosamine deacetylase (320 aa).

Positions 92, 251, and 255 each coordinate Zn(2+). His278 serves as the catalytic Proton donor.

It belongs to the LpxC family. Zn(2+) serves as cofactor.

The catalysed reaction is a UDP-3-O-[(3R)-3-hydroxyacyl]-N-acetyl-alpha-D-glucosamine + H2O = a UDP-3-O-[(3R)-3-hydroxyacyl]-alpha-D-glucosamine + acetate. It functions in the pathway glycolipid biosynthesis; lipid IV(A) biosynthesis; lipid IV(A) from (3R)-3-hydroxytetradecanoyl-[acyl-carrier-protein] and UDP-N-acetyl-alpha-D-glucosamine: step 2/6. Functionally, catalyzes the hydrolysis of UDP-3-O-myristoyl-N-acetylglucosamine to form UDP-3-O-myristoylglucosamine and acetate, the committed step in lipid A biosynthesis. This chain is UDP-3-O-acyl-N-acetylglucosamine deacetylase, found in Psychrobacter arcticus (strain DSM 17307 / VKM B-2377 / 273-4).